The sequence spans 527 residues: MTVTDTAASRLSRLKAHADLLAQSLRGIEKEGLRVDAQGKLAVTPHPSGLGSALTNEHVTTDYSEALLELITGTHGRVEPLLAELENTHRFVYSVLDGEYIWNQSMPATLPPEADIPIAWYGRSNTGMLKHVYRRGLAERYGKAMQCIAGVHYNFSLPDALWEILDPGAADPQTRRSRGYIGLIRNFTRYSWLLMYLFGAAPALSRSFMGDRPHPLQALDADTLYLPHATSLRMSDLGYQNNKAQAQLKLCYNDLDTFLARLYGAVTQPWPEYQAIGTHRDGQWIQLNTNVLQIENEYYSSIRPKRATGRCERPVTALAERGVQYVEVRCLDIDPQQPVGIAADTARFVDAFLLFCAVSDSPYFPQNGYCQRSADNFSVVVKEGRKPGLMLDRDGVAISLPDWGRELLDHIAPYAALYDQALGGDAYARALQAQHAKLGHADDTPSARLLAELRDQGVPFHEYSLQLSRRHADALRAQPLPADVAAGYAEAARQSHAEQARLEQSDDVDFDTYVARYQAALKAPGSR.

Belongs to the glutamate--cysteine ligase type 1 family. Type 1 subfamily.

It catalyses the reaction L-cysteine + L-glutamate + ATP = gamma-L-glutamyl-L-cysteine + ADP + phosphate + H(+). The protein operates within sulfur metabolism; glutathione biosynthesis; glutathione from L-cysteine and L-glutamate: step 1/2. The sequence is that of Glutamate--cysteine ligase from Bordetella petrii (strain ATCC BAA-461 / DSM 12804 / CCUG 43448).